We begin with the raw amino-acid sequence, 138 residues long: Nucleoside diphosphate kinase (138 aa).

Positions 10, 58, 86, 92, 103, and 113 each coordinate ATP. His116 (pros-phosphohistidine intermediate) is an active-site residue.

This sequence belongs to the NDK family. Homotetramer. Mg(2+) serves as cofactor.

It localises to the cytoplasm. The catalysed reaction is a 2'-deoxyribonucleoside 5'-diphosphate + ATP = a 2'-deoxyribonucleoside 5'-triphosphate + ADP. It carries out the reaction a ribonucleoside 5'-diphosphate + ATP = a ribonucleoside 5'-triphosphate + ADP. Functionally, major role in the synthesis of nucleoside triphosphates other than ATP. The ATP gamma phosphate is transferred to the NDP beta phosphate via a ping-pong mechanism, using a phosphorylated active-site intermediate. The sequence is that of Nucleoside diphosphate kinase from Actinobacillus pleuropneumoniae serotype 5b (strain L20).